A 117-amino-acid chain; its full sequence is Tyrosine-protein phosphatase 25 (117 aa).

In terms of domain architecture, Tyrosine-protein phosphatase spans 1–117 (WLMIIEQKCN…DLIGQSPIVV (117 aa)). Asp85 is a binding site for substrate.

The protein belongs to the protein-tyrosine phosphatase family.

It catalyses the reaction O-phospho-L-tyrosyl-[protein] + H2O = L-tyrosyl-[protein] + phosphate. This Styela plicata (Wrinkled sea squirt) protein is Tyrosine-protein phosphatase 25 (STY-25).